The following is a 574-amino-acid chain: Putative ABC transporter ATP-binding protein VV2_1533 (574 aa).

2 consecutive ABC transporter domains span residues 3–244 (IEFS…GIRE) and 299–533 (LDVR…ANLT). Residues 37-44 (GPSGSGKS) and 332-339 (GKNGSGKS) contribute to the ATP site.

This sequence belongs to the ABC transporter superfamily.

Its subcellular location is the cell inner membrane. Probably part of an ABC transporter complex. Responsible for energy coupling to the transport system. The protein is Putative ABC transporter ATP-binding protein VV2_1533 of Vibrio vulnificus (strain CMCP6).